The chain runs to 518 residues: D-aminopeptidase (518 aa).

Catalysis depends on Ser62, which acts as the Nucleophile. Lys65 serves as the catalytic Proton donor/acceptor. Residues 477 to 487 form an important for specificity region; sequence QRSMDAPSPGE. Position 481 (Asp481) interacts with substrate.

This sequence belongs to the peptidase S12 family. As to quaternary structure, homodimer.

It carries out the reaction Release of an N-terminal D-amino acid from a peptide, Xaa-|-Yaa-, in which Xaa is preferably D-Ala, D-Ser or D-Thr. D-amino acid amides and methyl esters also are hydrolyzed, as is glycine amide.. With respect to regulation, inhibited by beta-lactam compounds such as 6-aminopenicillic acid, 7-aminocephalosporanic acid, benzylpenicillin and ampicillin. Inhibited by p-chloromercuribenzoate. Its function is as follows. Hydrolyzes N-terminal residues in D-amino acid-containing peptides. The protein is D-aminopeptidase of Brucella ovis (strain ATCC 25840 / 63/290 / NCTC 10512).